Here is a 256-residue protein sequence, read N- to C-terminus: 5'-nucleotidase SurE (256 aa).

4 residues coordinate a divalent metal cation: Asp-9, Asp-10, Ser-40, and Asn-94.

It belongs to the SurE nucleotidase family. A divalent metal cation serves as cofactor.

The protein resides in the cytoplasm. It catalyses the reaction a ribonucleoside 5'-phosphate + H2O = a ribonucleoside + phosphate. Functionally, nucleotidase that shows phosphatase activity on nucleoside 5'-monophosphates. This Campylobacter fetus subsp. fetus (strain 82-40) protein is 5'-nucleotidase SurE.